Consider the following 327-residue polypeptide: MALVHKLLRGTYFLRKFXKPTSALYPFLGIRFAEYSSSLQKPVASPGKASSQRKTEGDLQGDHQKEVALDITSSEEKPDVSFDKAIRDEAMYHFRHLKDEIVDHWRGPEGHPLHEVLLEQAKVVWQFRGKEDLDKWTVTSDKTIGGRSEVFLKMGKNNQSALLYGTLSSEAPQDGESTRSGYCAMISRIPRGAFERKMSYDWSQFNTLYLRVRGDGRPWMVNIKEDTDFFQRTNQMYSYFMFTRGGPYWQEVKIPFSKFFFSNRGRIRDVQHELPLDKISSIGFTLADKVDGPFFLEIDFIGVFTDPAHTEEFAYENSPELNPRLFK.

The N-terminal 24 residues, 1–24, are a transit peptide targeting the mitochondrion; it reads MALVHKLLRGTYFLRKFXKPTSAL. The segment at 42-63 is disordered; it reads PVASPGKASSQRKTEGDLQGDH. The segment covering 53–63 has biased composition (basic and acidic residues); it reads RKTEGDLQGDH. A Phosphoserine modification is found at S318.

This sequence belongs to the CIA30 family. As to quaternary structure, part of the mitochondrial complex I assembly/MCIA complex that comprises at least the core subunits TMEM126B, NDUFAF1, ECSIT and ACAD9 and complement subunits such as COA1 and TMEM186. Interacts with ECSIT. Interacts with ACAD9. At early stages of complex I assembly, it is found in intermediate subcomplexes that contain different subunits including NDUFB6, NDUFA6, NDUFA9, NDUFS3, NDUFS7, ND1, ND2 and ND3. Interacts with TMEM70 and TMEM242.

The protein localises to the mitochondrion. The protein resides in the mitochondrion matrix. As part of the MCIA complex, involved in the assembly of the mitochondrial complex I. This Pan troglodytes (Chimpanzee) protein is Complex I intermediate-associated protein 30, mitochondrial.